The primary structure comprises 347 residues: E3 ubiquitin-protein ligase ARK2C (347 aa).

Disordered regions lie at residues 23 to 79 (PFQR…GTLH) and 268 to 289 (PHKY…GEES). The segment at 267–269 (FPH) is ubiquitin binding. Basic and acidic residues predominate over residues 276 to 285 (PQDSKGKKDE). Residues Cys-295 and Cys-298 each contribute to the Zn(2+) site. The RING-type; atypical zinc finger occupies 295–336 (CTICLSMLEDGEDVRRLPCMHLFHQLCVDQWLAMSKKCPICR). Positions 310 to 314 (RLPCM) are ubiquitin binding. Zn(2+) is bound by residues His-318 and Cys-321.

The protein belongs to the Arkadia family. Monomer; binding to the ubiquitin-conjugating enzyme E2 does not trigger homodimerization. In terms of tissue distribution, expressed in neurons of the nervous system.

Its subcellular location is the nucleus. It carries out the reaction S-ubiquitinyl-[E2 ubiquitin-conjugating enzyme]-L-cysteine + [acceptor protein]-L-lysine = [E2 ubiquitin-conjugating enzyme]-L-cysteine + N(6)-ubiquitinyl-[acceptor protein]-L-lysine.. Its activity is regulated as follows. Binds free ubiquitin non-covalently via its RING-type zinc finger. Ubiquitin-binding leads to enhance the E3 ubiquitin-protein ligase activity by stabilizing the ubiquitin-conjugating enzyme E2 (donor ubiquitin) in the 'closed' conformation and activating ubiquitin transfer. In terms of biological role, E3 ubiquitin-protein ligase that acts as a regulator of motor axon elongation. Required for efficient motor axon extension in the dorsal forelimb by enhancing the transcriptional responses of the SMAD1/SMAD5/SMAD8 effectors, which are activated downstream of BMP. Acts by mediating ubiquitination and degradation of SMAD inhibitors such as SMAD6, SMAD7, SKI and SNON isoform of SKIL. The sequence is that of E3 ubiquitin-protein ligase ARK2C from Mus musculus (Mouse).